The primary structure comprises 359 residues: Mitochondrial glutathione transporter SLC25A39 (359 aa).

Over 1-14 (MDDQDPGGISPLQQ) the chain is Mitochondrial intermembrane. Solcar repeat units follow at residues 9-151 (ISPL…LKAF), 159-243 (SDLY…VKSQ), and 253-347 (TSVG…GKSF). A helical membrane pass occupies residues 15-35 (MVASGAGAVVTSLFMTPLDVV). Topologically, residues 36-121 (KVRLQSQRPT…VKIVRHEGTR (86 aa)) are mitochondrial matrix. Residues C74, C78, C88, and C94 each coordinate [2Fe-2S] cluster. A helical membrane pass occupies residues 122–142 (TLWSGLPATLVMTVPATAIYF). Topologically, residues 143 to 164 (TAYDQLKAFLCGQSLTSDLYAP) are mitochondrial intermembrane. A helical transmembrane segment spans residues 165–185 (MVAGALARMGTVTVVSPLELV). The Mitochondrial matrix segment spans residues 186–214 (RTKLQAQHVSYRELAACVQAAVAQGGWRS). Residues 215-235 (LWLGWGPTALRDVPFSALYWF) traverse the membrane as a helical segment. The Mitochondrial intermembrane segment spans residues 236–255 (NYELVKSQLNGPRQKEQTSV). A helical transmembrane segment spans residues 256–276 (GISFVAGGISGMVAATLTLPF). Topologically, residues 277-317 (DVVKTQRQMSLGAVEAMRVKPPRVDSTWLLLRRIQAESGTR) are mitochondrial matrix. The helical transmembrane segment at 318 to 338 (GLFAGFLPRIIKAAPSCAIMI) threads the bilayer. Residues 339-359 (STYEFGKSFFHRLNQEQPLGH) are Mitochondrial intermembrane-facing.

This sequence belongs to the mitochondrial carrier (TC 2.A.29) family. Cleaved and degraded by AFG3L2; degradation by AFG3L2 is regulated by the ability of SLC25A39 to bind iron-sulfur. In absence of mitochondrial glutathione, SLC25A39 binds iron-sulfur, preventing cleavage and degradation by AFG3L2. The presence of mitochondrial glutathione prevents iron-sulfur-binding to SLC25A39, promoting cleavage and degradation by AFG3L2.

The protein resides in the mitochondrion inner membrane. The catalysed reaction is glutathione(in) = glutathione(out). With respect to regulation, the activity of SLC25A39 is regulated by levels of mitochondrial glutathione via its ability to bind [2Fe-2S] iron-sulfur cluster. Upon physiological levels of mitochondrial glutathione, glutathione prevents iron-sulfur-binding to SLC25A39 promoting cleavage and degradation by AFG3L2. Upon depletion of mitochondrial glutathione, SLC25A39 binds iron-sulfur, preventing cleavage and degradation by AFG3L2. Its function is as follows. Mitochondrial transporter required for glutathione import into mitochondria. Glutathione, which plays key roles in oxidative metabolism, is produced exclusively in the cytosol and is imported in many organelles. Mitochondrial glutathione is required for the activity and stability of proteins containing iron-sulfur clusters, as well as erythropoiesis. The protein is Mitochondrial glutathione transporter SLC25A39 (Slc25a39) of Rattus norvegicus (Rat).